We begin with the raw amino-acid sequence, 186 residues long: Ribosome-recycling factor (186 aa).

Composition is skewed to basic and acidic residues over residues 134–169 and 176–186; these read RDAN…KKAE and AKAREAEVMED. Positions 134-186 are disordered; sequence RDANKAAETAEKDKEMTEDDRDKTKDQVQELTKKAETNVNESAKAREAEVMED.

The protein belongs to the RRF family.

The protein resides in the cytoplasm. Its function is as follows. Responsible for the release of ribosomes from messenger RNA at the termination of protein biosynthesis. May increase the efficiency of translation by recycling ribosomes from one round of translation to another. The sequence is that of Ribosome-recycling factor from Rhodopirellula baltica (strain DSM 10527 / NCIMB 13988 / SH1).